Consider the following 541-residue polypeptide: EH domain-containing protein 4 (541 aa).

Residue M1 is modified to N-acetylmethionine. A Dynamin-type G domain is found at 58-289 (FENKPMILLV…DLFRDIQSLP (232 aa)). The tract at residues 68–75 (GQYSTGKT) is G1 motif. Residue 68–75 (GQYSTGKT) coordinates ATP. A G2 motif region spans residues 94–95 (EP). Residues 156–159 (DSPG) form a G3 motif region. The residue at position 162 (S162) is a Phosphoserine. The tract at residues 222 to 225 (NKAD) is G4 motif. K223 provides a ligand contact to ATP. Position 246 (V246) is a region of interest, G5 motif. ATP is bound at residue W261. Positions 447 to 535 (DKPVYDELFY…PHLVPPSHRK (89 aa)) constitute an EH domain. Y451 carries the phosphotyrosine modification. S459 is modified (phosphoserine). The 36-residue stretch at 479-514 (LPNSVLGKIWKLADCDCDGMLDEEEFALAKHLIKIK) folds into the EF-hand domain. The Ca(2+) site is built by D492, D494, D496, M498, and E503.

Belongs to the TRAFAC class dynamin-like GTPase superfamily. Dynamin/Fzo/YdjA family. EHD subfamily. In terms of assembly, homooligomer, and heterooligomer with EHD1, EHD2 and EHD3. Forms a complex with EHD4 and MICALL1; the complex controls CDH5 trafficking and coordinates angiogenesis. In terms of tissue distribution, highly expressed in pancreas and heart.

It localises to the early endosome membrane. It is found in the recycling endosome membrane. The protein localises to the cell membrane. The protein resides in the cell junction. Its subcellular location is the adherens junction. In terms of biological role, ATP- and membrane-binding protein that probably controls membrane reorganization/tubulation upon ATP hydrolysis. Plays a role in early endosomal transport. During sprouting angiogenesis, in complex with PACSIN2 and MICALL1, forms recycling endosome-like tubular structure at asymmetric adherens junctions to control CDH5 trafficking. The chain is EH domain-containing protein 4 from Homo sapiens (Human).